We begin with the raw amino-acid sequence, 199 residues long: Recombination protein RecR (199 aa).

The segment at 57-72 adopts a C4-type zinc-finger fold; the sequence is CTVCGHITDIDPCAIC. Positions 80 to 176 constitute a Toprim domain; the sequence is TVVCVVQDSR…RVTRLAHGLP (97 aa).

The protein belongs to the RecR family.

Its function is as follows. May play a role in DNA repair. It seems to be involved in an RecBC-independent recombinational process of DNA repair. It may act with RecF and RecO. The chain is Recombination protein RecR from Exiguobacterium sp. (strain ATCC BAA-1283 / AT1b).